A 233-amino-acid polypeptide reads, in one-letter code: Homeobox protein Hox-D4a (233 aa).

Residues 124–129 (VYPWMK) carry the Antp-type hexapeptide motif. Residues 145–204 (PKRSRTAYTRQQVLELEKEFHFNRYLTRRRRIEIAHTLCLSERQIKIWFQNRRMKWTKDH) constitute a DNA-binding region (homeobox). Residues 203–233 (DHKLPNTKGRSAPASSHLQSIHKDQTDITSL) form a disordered region. The segment covering 223–233 (IHKDQTDITSL) has biased composition (basic and acidic residues).

Belongs to the Antp homeobox family. Deformed subfamily.

The protein resides in the nucleus. In terms of biological role, sequence-specific transcription factor which is part of a developmental regulatory system that provides cells with specific positional identities on the anterior-posterior axis. This Takifugu rubripes (Japanese pufferfish) protein is Homeobox protein Hox-D4a (hoxd4a).